A 463-amino-acid polypeptide reads, in one-letter code: Argininosuccinate lyase (463 aa).

The protein belongs to the lyase 1 family. Argininosuccinate lyase subfamily.

It localises to the cytoplasm. It carries out the reaction 2-(N(omega)-L-arginino)succinate = fumarate + L-arginine. It participates in amino-acid biosynthesis; L-arginine biosynthesis; L-arginine from L-ornithine and carbamoyl phosphate: step 3/3. The polypeptide is Argininosuccinate lyase (Bradyrhizobium sp. (strain BTAi1 / ATCC BAA-1182)).